The sequence spans 333 residues: T-cell surface glycoprotein CD1c (333 aa).

The signal sequence occupies residues 1 to 17 (MLFLQFLLLALLLPGGD). Residues 18–302 (NADASQEHVS…ILYWGHHFSM (285 aa)) are Extracellular-facing. N-linked (GlcNAc...) asparagine glycans are attached at residues Asn38, Asn70, Asn75, and Asn146. 2 cysteine pairs are disulfide-bonded: Cys120–Cys185 and Cys225–Cys280. Residues 206–296 (PEAWLSSRPS…LGGQDIILYW (91 aa)) form the Ig-like domain. A helical transmembrane segment spans residues 303–323 (NWIALVVIVPLVILIVLVLWF). Residues 324–333 (KKHCSYQDIL) lie on the Cytoplasmic side of the membrane. The Internalization signal motif lies at 329-332 (YQDI).

As to quaternary structure, heterodimer with B2M (beta-2-microglobulin). As to expression, expressed on cortical thymocytes, on certain T-cell leukemias, and in various other tissues.

The protein resides in the cell membrane. It is found in the endosome membrane. Its subcellular location is the lysosome. Its function is as follows. Antigen-presenting protein that binds self and non-self lipid and glycolipid antigens and presents them to T-cell receptors on natural killer T-cells. The polypeptide is T-cell surface glycoprotein CD1c (CD1C) (Homo sapiens (Human)).